The chain runs to 267 residues: MSAQPKPQLMGHIIAGYPSFESSLYAALGICQAGASYLEVQFPFSDPNADGRVIEEACNKSIAQGFKVAQGFKLLHTLSQHINQDNKQPTRLIIMTYANLIFHYGIEAFIKEAKKCGVWGIIAPDLPIESDESLRILAKKHHIRIISLIAPKVSISRIKKIAKISDEIVYVVARAGITGEKTHIDKALFEWIRLIQKHCKKPIALGFGINSYEQVAALKDKVDIIVAGSYFVRFISELSTQSQLSPQDYMHKLQAHAQMLMGWDINE.

Residues E39 and D50 each act as proton acceptor in the active site.

This sequence belongs to the TrpA family. In terms of assembly, tetramer of two alpha and two beta chains.

The catalysed reaction is (1S,2R)-1-C-(indol-3-yl)glycerol 3-phosphate + L-serine = D-glyceraldehyde 3-phosphate + L-tryptophan + H2O. It functions in the pathway amino-acid biosynthesis; L-tryptophan biosynthesis; L-tryptophan from chorismate: step 5/5. Functionally, the alpha subunit is responsible for the aldol cleavage of indoleglycerol phosphate to indole and glyceraldehyde 3-phosphate. The polypeptide is Tryptophan synthase alpha chain (Helicobacter hepaticus (strain ATCC 51449 / 3B1)).